The chain runs to 246 residues: 1-(5-phosphoribosyl)-5-[(5-phosphoribosylamino)methylideneamino] imidazole-4-carboxamide isomerase (246 aa).

Residue Asp8 is the Proton acceptor of the active site. The active-site Proton donor is the Asp131.

This sequence belongs to the HisA/HisF family.

The protein localises to the cytoplasm. The enzyme catalyses 1-(5-phospho-beta-D-ribosyl)-5-[(5-phospho-beta-D-ribosylamino)methylideneamino]imidazole-4-carboxamide = 5-[(5-phospho-1-deoxy-D-ribulos-1-ylimino)methylamino]-1-(5-phospho-beta-D-ribosyl)imidazole-4-carboxamide. Its pathway is amino-acid biosynthesis; L-histidine biosynthesis; L-histidine from 5-phospho-alpha-D-ribose 1-diphosphate: step 4/9. This chain is 1-(5-phosphoribosyl)-5-[(5-phosphoribosylamino)methylideneamino] imidazole-4-carboxamide isomerase, found in Bordetella bronchiseptica (strain ATCC BAA-588 / NCTC 13252 / RB50) (Alcaligenes bronchisepticus).